A 1384-amino-acid chain; its full sequence is Enhancer of mRNA-decapping protein 4 (1384 aa).

WD repeat units follow at residues 171–211 (GFTG…SKIQ), 227–274 (NSNR…SNNS), 292–331 (GHAA…QDQP), and 340–390 (HNGQ…CLQT). Disordered stretches follow at residues 471–494 (TEVL…TSES), 551–584 (AMSS…SPAP), and 796–931 (AGAA…MSTE). Over residues 482–494 (SMTAEGNQGTSES) the composition is skewed to polar residues. The span at 834–844 (CSREEIKDRHI) shows a compositional bias: basic and acidic residues. 2 stretches are compositionally biased toward polar residues: residues 854–866 (HLTQ…ASAE) and 918–931 (SSQS…MSTE). The stretch at 930 to 1012 (TEVQDELLQM…QQLQDQLVQQ (83 aa)) forms a coiled coil.

This sequence belongs to the WD repeat EDC4 family.

It is found in the cytoplasm. The protein localises to the P-body. The protein resides in the nucleus. In the process of mRNA degradation, seems to play a role in mRNA decapping. This Danio rerio (Zebrafish) protein is Enhancer of mRNA-decapping protein 4 (edc4).